The sequence spans 490 residues: Bifunctional protein HldE (490 aa).

Residues 1 to 328 (MFSFDALLQA…LRRRILPHAS (328 aa)) are ribokinase. Residue 205–208 (NRKE) participates in ATP binding. The active site involves Asp275. Positions 358 to 490 (FTNGCFDILH…LVARAREGQS (133 aa)) are cytidylyltransferase.

This sequence in the N-terminal section; belongs to the carbohydrate kinase PfkB family. In the C-terminal section; belongs to the cytidylyltransferase family. Homodimer.

The enzyme catalyses D-glycero-beta-D-manno-heptose 7-phosphate + ATP = D-glycero-beta-D-manno-heptose 1,7-bisphosphate + ADP + H(+). It carries out the reaction D-glycero-beta-D-manno-heptose 1-phosphate + ATP + H(+) = ADP-D-glycero-beta-D-manno-heptose + diphosphate. It participates in nucleotide-sugar biosynthesis; ADP-L-glycero-beta-D-manno-heptose biosynthesis; ADP-L-glycero-beta-D-manno-heptose from D-glycero-beta-D-manno-heptose 7-phosphate: step 1/4. Its pathway is nucleotide-sugar biosynthesis; ADP-L-glycero-beta-D-manno-heptose biosynthesis; ADP-L-glycero-beta-D-manno-heptose from D-glycero-beta-D-manno-heptose 7-phosphate: step 3/4. Functionally, catalyzes the phosphorylation of D-glycero-D-manno-heptose 7-phosphate at the C-1 position to selectively form D-glycero-beta-D-manno-heptose-1,7-bisphosphate. Its function is as follows. Catalyzes the ADP transfer from ATP to D-glycero-beta-D-manno-heptose 1-phosphate, yielding ADP-D-glycero-beta-D-manno-heptose. This chain is Bifunctional protein HldE, found in Rhodopseudomonas palustris (strain TIE-1).